A 65-amino-acid chain; its full sequence is Toxin NaTx-22 (65 aa).

The region spanning 1–64 (KDGYPVIKTT…TYPIPGKTCK (64 aa)) is the LCN-type CS-alpha/beta domain. 4 cysteine pairs are disulfide-bonded: cysteine 12–cysteine 63, cysteine 16–cysteine 39, cysteine 25–cysteine 44, and cysteine 29–cysteine 46.

The protein belongs to the long (4 C-C) scorpion toxin superfamily. Sodium channel inhibitor family. In terms of tissue distribution, expressed by the venom gland.

The protein localises to the secreted. Its function is as follows. Probable sodium channel inhibitor. The protein is Toxin NaTx-22 of Centruroides sculpturatus (Arizona bark scorpion).